The primary structure comprises 517 residues: RNA-binding region-containing protein 3 (517 aa).

Residues 1-26 are disordered; it reads MAAPEQPLAISRGCTSSSSLSPPRGD. Residues 1 to 257 form a necessary for interaction with PDCD7 region; sequence MAAPEQPLAI…STDDEDRQRM (257 aa). A Phosphoserine modification is found at Ser21. The 76-residue stretch at 27–102 folds into the RRM 1 domain; that stretch reads RTLLVRHLPA…HTLVVEFAKE (76 aa). Disordered stretches follow at residues 106-130 and 213-254; these read VHSP…DDKE and MPLH…DEDR. Ser108 carries the phosphoserine modification. Over residues 115 to 130 the composition is skewed to basic and acidic residues; the sequence is SEKKKRSDDPVEDDKE. Residues 211–380 form a necessary for binding to m(7)G-capped U12 snRNA region; that stretch reads DYMPLHAPLP…LDITEEIKED (170 aa). Positions 217–230 are enriched in pro residues; sequence APLPPTSPQPPEEP. The segment covering 231–252 has biased composition (acidic residues); it reads PLPDEDEELSSEESEYESTDDE. In terms of domain architecture, RRM 2 spans 420 to 503; the sequence is CRIYVKNLAK…KPMVVQFARS (84 aa).

As to quaternary structure, component of the U11/U12 snRNPs that are part of the U12-type spliceosome. Found in a complex with m(7)G-capped U12 snRNA. Interacts with PDCD7. Highly expressed in pancreas and kidney. Detected at lower levels in heart, brain, placenta, lung, liver, spleen, thymus, prostate, testis, ovary, small intestine, colon and leukocytes.

Its subcellular location is the nucleus. Its function is as follows. Participates in pre-mRNA U12-dependent splicing, performed by the minor spliceosome which removes U12-type introns. U12-type introns comprises less than 1% of all non-coding sequences. Binds to the 3'-stem-loop of m(7)G-capped U12 snRNA. This is RNA-binding region-containing protein 3 (RNPC3) from Homo sapiens (Human).